Here is a 518-residue protein sequence, read N- to C-terminus: Chromosomal replication initiator protein DnaA (518 aa).

The segment at 1–72 (MNEFWQHCSA…DLARDFWHSP (72 aa)) is domain I, interacts with DnaA modulators. The tract at residues 72-181 (PVDVQFVLDP…GESDSTYERS (110 aa)) is domain II. The tract at residues 155–178 (AAARRTWRPGAAAQAAGGESDSTY) is disordered. A domain III, AAA+ region region spans residues 182–398 (KLNPVLTFDN…GALRKILAYS (217 aa)). ATP-binding residues include G226, G228, K229, and T230. The domain IV, binds dsDNA stretch occupies residues 399–518 (KFHGREITIE…LHVLEQTLKG (120 aa)).

This sequence belongs to the DnaA family. In terms of assembly, oligomerizes as a right-handed, spiral filament on DNA at oriC.

The protein resides in the cytoplasm. In terms of biological role, plays an essential role in the initiation and regulation of chromosomal replication. ATP-DnaA binds to the origin of replication (oriC) to initiate formation of the DNA replication initiation complex once per cell cycle. Binds the DnaA box (a 9 base pair repeat at the origin) and separates the double-stranded (ds)DNA. Forms a right-handed helical filament on oriC DNA; dsDNA binds to the exterior of the filament while single-stranded (ss)DNA is stabiized in the filament's interior. The ATP-DnaA-oriC complex binds and stabilizes one strand of the AT-rich DNA unwinding element (DUE), permitting loading of DNA polymerase. After initiation quickly degrades to an ADP-DnaA complex that is not apt for DNA replication. Binds acidic phospholipids. The protein is Chromosomal replication initiator protein DnaA of Paraburkholderia phymatum (strain DSM 17167 / CIP 108236 / LMG 21445 / STM815) (Burkholderia phymatum).